Consider the following 122-residue polypeptide: ATP-dependent Clp protease adapter protein ClpS (122 aa).

The disordered stretch occupies residues 1-27; sequence MVRMATKPPSMTPTPPTGAPPRDDGGS. Residues 10–19 show a composition bias toward pro residues; it reads SMTPTPPTGA.

The protein belongs to the ClpS family. Binds to the N-terminal domain of the chaperone ClpA.

Its function is as follows. Involved in the modulation of the specificity of the ClpAP-mediated ATP-dependent protein degradation. This Paracidovorax citrulli (strain AAC00-1) (Acidovorax citrulli) protein is ATP-dependent Clp protease adapter protein ClpS.